The primary structure comprises 98 residues: Protein S100-A13 (98 aa).

Residues 18-53 (TTFFTFAGREGRKGSLSVNEFKELVTQQLPHLLKDV) form the EF-hand domain. Positions 32, 37, 64, 66, 68, 70, and 75 each coordinate Ca(2+). Position 32 is a phosphoserine (Ser32).

This sequence belongs to the S-100 family. As to quaternary structure, homodimer. Part of a copper-dependent multiprotein complex containing S100A13, FGF1 and SYT1. Interacts with FGF1 and SYT1. Interacts with IL1A.

It localises to the cytoplasm. Its subcellular location is the secreted. Functionally, plays a role in the export of proteins that lack a signal peptide and are secreted by an alternative pathway. Binds two calcium ions per subunit. Binds one copper ion. Binding of one copper ion does not interfere with calcium binding. Required for the copper-dependent stress-induced export of IL1A and FGF1. The calcium-free protein binds to lipid vesicles containing phosphatidylserine, but not to vesicles containing phosphatidylcholine. The sequence is that of Protein S100-A13 (S100A13) from Bos taurus (Bovine).